A 320-amino-acid polypeptide reads, in one-letter code: Nicotianamine synthase 1 (320 aa).

It belongs to the nicotianamine synthase (NAS)-like family. In shoots and roots.

The catalysed reaction is 3 S-adenosyl-L-methionine = nicotianamine + 3 S-methyl-5'-thioadenosine + 3 H(+). In terms of biological role, synthesizes nicotianamine, a polyamine which serves as a sensor for the physiological iron status within the plant, and/or might be involved in the transport of iron. In Arabidopsis thaliana (Mouse-ear cress), this protein is Nicotianamine synthase 1 (NAS1).